The sequence spans 788 residues: Probable potassium transporter 9 (788 aa).

At 1–21 the chain is on the cytoplasmic side; it reads MDPEFGRGMAPRKREPWRTTL. The chain crosses the membrane as a helical span at residues 22 to 42; it reads LLAYQSLGVVYGDLSISPLYV. Residues 43–59 lie on the Extracellular side of the membrane; sequence YKSTFAEDITHSESNEE. Residues 60 to 80 form a helical membrane-spanning segment; that stretch reads IFGVLSFVFWTLTLIPLIKYV. Residues 81–151 lie on the Cytoplasmic side of the membrane; sequence SIVLRADDNG…EKHKTLQTAL (71 aa). Residues 152–172 traverse the membrane as a helical segment; it reads LIMVMIGTCMVIGDGVLTPAI. At 173–191 the chain is on the extracellular side; that stretch reads SVFSAVSGLELSLSRDQHE. Residues 192–212 form a helical membrane-spanning segment; it reads YAVIPITCVILVFLFALQHYG. Over 213–215 the chain is Cytoplasmic; the sequence is THR. The helical transmembrane segment at 216-236 threads the bilayer; the sequence is VGFLFAPIVLAWLICMSMLGL. Over 237 to 264 the chain is Extracellular; sequence YNIIHWNPQVYRALNPYYMLKFLRKTKK. Residues 265–285 traverse the membrane as a helical segment; it reads SGWMSLGGILLCMTGSEAMFA. Residues 286-292 lie on the Cytoplasmic side of the membrane; sequence DLGHFSY. A helical membrane pass occupies residues 293–313; it reads SAIQLAFTTLVYPALILGYMG. Residues 314 to 343 lie on the Extracellular side of the membrane; that stretch reads QAAYLSKHHTLNSTYQIGYYISVPESVRWP. Asparagine 325 is a glycosylation site (N-linked (GlcNAc...) asparagine). Residues 344–364 traverse the membrane as a helical segment; sequence VLVLAILASVVGSQAIISGTF. The Cytoplasmic segment spans residues 365–391; the sequence is SIINQSQSLSCFPRVKVVHTSENIHGQ. A helical membrane pass occupies residues 392–412; sequence IYIPEINWLLMVLCIAVTVGF. Residues 413–422 lie on the Extracellular side of the membrane; sequence RDTKHMGNAS. The N-linked (GlcNAc...) asparagine glycan is linked to asparagine 420. The helical transmembrane segment at 423–443 threads the bilayer; it reads GLAVITVMLVTTCLTSLVIML. Residues 444 to 451 lie on the Cytoplasmic side of the membrane; that stretch reads CWHRSPAL. The chain crosses the membrane as a helical span at residues 452–472; the sequence is ALVFFLFFGSIEVLYFSASLI. Residues 473 to 476 lie on the Extracellular side of the membrane; that stretch reads KFRE. A helical membrane pass occupies residues 477-497; sequence GAWLPIMLALILMAVMFIWHH. At 498 to 788 the chain is on the cytoplasmic side; it reads TTIKKYEFDL…LLEVGMVYVL (291 aa).

It belongs to the HAK/KUP transporter (TC 2.A.72.3) family.

The protein localises to the membrane. Functionally, high-affinity potassium transporter. The protein is Probable potassium transporter 9 (HAK9) of Oryza sativa subsp. japonica (Rice).